Here is a 299-residue protein sequence, read N- to C-terminus: Pyridoxal 5'-phosphate synthase subunit PdxS (299 aa).

D24 is a binding site for D-ribose 5-phosphate. The active-site Schiff-base intermediate with D-ribose 5-phosphate is K81. D-ribose 5-phosphate is bound at residue G153. D-glyceraldehyde 3-phosphate is bound at residue R165. Residues G219 and 240-241 (GS) each bind D-ribose 5-phosphate.

The protein belongs to the PdxS/SNZ family. In the presence of PdxT, forms a dodecamer of heterodimers.

The catalysed reaction is aldehydo-D-ribose 5-phosphate + D-glyceraldehyde 3-phosphate + L-glutamine = pyridoxal 5'-phosphate + L-glutamate + phosphate + 3 H2O + H(+). Its pathway is cofactor biosynthesis; pyridoxal 5'-phosphate biosynthesis. Catalyzes the formation of pyridoxal 5'-phosphate from ribose 5-phosphate (RBP), glyceraldehyde 3-phosphate (G3P) and ammonia. The ammonia is provided by the PdxT subunit. Can also use ribulose 5-phosphate and dihydroxyacetone phosphate as substrates, resulting from enzyme-catalyzed isomerization of RBP and G3P, respectively. In Methanococcus maripaludis (strain C5 / ATCC BAA-1333), this protein is Pyridoxal 5'-phosphate synthase subunit PdxS.